The sequence spans 261 residues: Kallikrein 1-related peptidase b1 (261 aa).

The N-terminal stretch at 1–18 (MWFLILFLALSLGGIDAA) is a signal peptide. The propeptide at 19–24 (PPVQSR) is activation peptide. Residues 25–258 (IVGGFKCEKN…FTSWIKDTLA (234 aa)) enclose the Peptidase S1 domain. 5 disulfide bridges follow: Cys31–Cys173, Cys50–Cys66, Cys152–Cys219, Cys184–Cys198, and Cys209–Cys234. Residue His65 is the Charge relay system of the active site. N-linked (GlcNAc...) asparagine glycosylation is present at Asn102. Asp120 serves as the catalytic Charge relay system. The active-site Charge relay system is the Ser213.

Belongs to the peptidase S1 family. Kallikrein subfamily.

It catalyses the reaction Preferential cleavage of Arg-|-Xaa bonds in small molecule substrates. Highly selective action to release kallidin (lysyl-bradykinin) from kininogen involves hydrolysis of Met-|-Xaa or Leu-|-Xaa.. Its function is as follows. Glandular kallikreins cleave Met-Lys and Arg-Ser bonds in kininogen to release Lys-bradykinin. The protein is Kallikrein 1-related peptidase b1 (Klk1b1) of Mus musculus (Mouse).